A 256-amino-acid polypeptide reads, in one-letter code: uncharacterized protein (256 aa).

The N-terminal stretch at 1–24 (MIKRVNKLVLGISLLFLVISITAG) is a signal peptide. The N-palmitoyl cysteine moiety is linked to residue Cys25. The S-diacylglycerol cysteine moiety is linked to residue Cys25.

The protein belongs to the staphylococcal tandem lipoprotein family.

The protein resides in the cell membrane. This is an uncharacterized protein from Staphylococcus aureus (strain MW2).